The chain runs to 122 residues: S-adenosylmethionine decarboxylase proenzyme (122 aa).

The Schiff-base intermediate with substrate; via pyruvic acid role is filled by serine 61. Serine 61 carries the pyruvic acid (Ser); by autocatalysis modification. The active-site Proton acceptor; for processing activity is the histidine 66. The Proton donor; for catalytic activity role is filled by cysteine 81.

The protein belongs to the prokaryotic AdoMetDC family. Type 1 subfamily. In terms of assembly, heterotetramer of two alpha and two beta chains arranged as a dimer of alpha/beta heterodimers. It depends on pyruvate as a cofactor. Post-translationally, is synthesized initially as an inactive proenzyme. Formation of the active enzyme involves a self-maturation process in which the active site pyruvoyl group is generated from an internal serine residue via an autocatalytic post-translational modification. Two non-identical subunits are generated from the proenzyme in this reaction, and the pyruvate is formed at the N-terminus of the alpha chain, which is derived from the carboxyl end of the proenzyme. The post-translation cleavage follows an unusual pathway, termed non-hydrolytic serinolysis, in which the side chain hydroxyl group of the serine supplies its oxygen atom to form the C-terminus of the beta chain, while the remainder of the serine residue undergoes an oxidative deamination to produce ammonia and the pyruvoyl group blocking the N-terminus of the alpha chain.

It catalyses the reaction S-adenosyl-L-methionine + H(+) = S-adenosyl 3-(methylsulfanyl)propylamine + CO2. Its pathway is amine and polyamine biosynthesis; S-adenosylmethioninamine biosynthesis; S-adenosylmethioninamine from S-adenosyl-L-methionine: step 1/1. Its function is as follows. Catalyzes the decarboxylation of S-adenosylmethionine to S-adenosylmethioninamine (dcAdoMet), the propylamine donor required for the synthesis of the polyamines spermine and spermidine from the diamine putrescine. This chain is S-adenosylmethionine decarboxylase proenzyme, found in Prochlorococcus marinus (strain MIT 9211).